Reading from the N-terminus, the 410-residue chain is Multifunctional CCA protein (410 aa).

ATP is bound by residues Gly8 and Arg11. Positions 8 and 11 each coordinate CTP. Mg(2+) contacts are provided by Asp21 and Asp23. 3 residues coordinate ATP: Arg91, Arg138, and Arg141. CTP-binding residues include Arg91, Arg138, and Arg141. An HD domain is found at 229 to 347 (TGIHQEMVSD…AQLALVCEAD (119 aa)).

Belongs to the tRNA nucleotidyltransferase/poly(A) polymerase family. Bacterial CCA-adding enzyme type 1 subfamily. In terms of assembly, monomer. Can also form homodimers and oligomers. The cofactor is Mg(2+). Requires Ni(2+) as cofactor.

The enzyme catalyses a tRNA precursor + 2 CTP + ATP = a tRNA with a 3' CCA end + 3 diphosphate. It carries out the reaction a tRNA with a 3' CCA end + 2 CTP + ATP = a tRNA with a 3' CCACCA end + 3 diphosphate. Catalyzes the addition and repair of the essential 3'-terminal CCA sequence in tRNAs without using a nucleic acid template. Adds these three nucleotides in the order of C, C, and A to the tRNA nucleotide-73, using CTP and ATP as substrates and producing inorganic pyrophosphate. tRNA 3'-terminal CCA addition is required both for tRNA processing and repair. Also involved in tRNA surveillance by mediating tandem CCA addition to generate a CCACCA at the 3' terminus of unstable tRNAs. While stable tRNAs receive only 3'-terminal CCA, unstable tRNAs are marked with CCACCA and rapidly degraded. The protein is Multifunctional CCA protein of Xanthomonas oryzae pv. oryzae (strain MAFF 311018).